Reading from the N-terminus, the 106-residue chain is Glutaredoxin-1 (106 aa).

Ala2 carries the N-acetylalanine modification. Positions 3–106 constitute a Glutaredoxin domain; that stretch reads QEFVNCKIQP…TRLKQIGALQ (104 aa). At Lys9 the chain carries N6-succinyllysine. Cystine bridges form between Cys23–Cys26 and Cys79–Cys83.

The protein belongs to the glutaredoxin family.

Its subcellular location is the cytoplasm. Has a glutathione-disulfide oxidoreductase activity in the presence of NADPH and glutathione reductase. Reduces low molecular weight disulfides and proteins. This is Glutaredoxin-1 (GLRX) from Homo sapiens (Human).